A 227-amino-acid chain; its full sequence is Cysteine-rich hydrophobic domain-containing protein 1 (227 aa).

Positions 1–84 are disordered; it reads MSILLPNMAE…PPRVVSEEHL (84 aa). Residues 13 to 23 show a composition bias toward acidic residues; the sequence is TISELEEEEEA. A compositionally biased stretch (low complexity) spans 24-44; the sequence is ATSSSSPSSSPSSSSSSSVSG. Over residues 45–72 the composition is skewed to acidic residues; that stretch reads PDEDEEDEEEEEEEDEEEEDEEEEEEEV. The stretch at 46 to 73 forms a coiled coil; sequence DEDEEDEEEEEEEDEEEEDEEEEEEEVP.

It belongs to the CHIC family. Palmitoylated. In terms of tissue distribution, expressed moderately in the brain.

The protein resides in the cell membrane. It is found in the cytoplasmic vesicle. In Mus musculus (Mouse), this protein is Cysteine-rich hydrophobic domain-containing protein 1 (Chic1).